Consider the following 512-residue polypeptide: tRNA modification GTPase gtpbp3, mitochondrial (512 aa).

Residues 246–434 enclose the TrmE-type G domain; sequence GANIAIVGPP…LLNLLKLNLK (189 aa). GTP-binding positions include 253–260, 300–304, and 375–378; these read GPPNAGKS, DTAGL, and NKSD.

It belongs to the TRAFAC class TrmE-Era-EngA-EngB-Septin-like GTPase superfamily. TrmE GTPase family.

The protein localises to the mitochondrion. In terms of biological role, GTPase involved in the 5-carboxymethylaminomethyl modification (mnm(5)s(2)U34) of the wobble uridine base in mitochondrial tRNAs. The sequence is that of tRNA modification GTPase gtpbp3, mitochondrial (gtpbp3) from Dictyostelium discoideum (Social amoeba).